The following is a 400-amino-acid chain: tRNA pseudouridine synthase Pus10 (400 aa).

In terms of domain architecture, THUMP spans 77–194 (QVYVELFGSP…DGSVSVQPRR (118 aa)). Y301 provides a ligand contact to substrate.

It belongs to the pseudouridine synthase Pus10 family.

It carries out the reaction uridine(54) in tRNA = pseudouridine(54) in tRNA. It catalyses the reaction uridine(55) in tRNA = pseudouridine(55) in tRNA. Functionally, responsible for synthesis of pseudouridine from uracil-54 and uracil-55 in the psi GC loop of transfer RNAs. The polypeptide is tRNA pseudouridine synthase Pus10 (Acidilobus saccharovorans (strain DSM 16705 / JCM 18335 / VKM B-2471 / 345-15)).